The chain runs to 230 residues: RNA chaperone ProQ (230 aa).

The tract at residues 106–181 (AKARVQAQRA…EERHTPVSDI (76 aa)) is disordered. Residues 146–155 (RRKDNAERKP) are compositionally biased toward basic and acidic residues. Residues 158 to 167 (AKPAAAAKPS) are compositionally biased toward low complexity.

It belongs to the ProQ family.

The protein resides in the cytoplasm. Its function is as follows. RNA chaperone with significant RNA binding, RNA strand exchange and RNA duplexing activities. May regulate ProP activity through an RNA-based, post-transcriptional mechanism. This is RNA chaperone ProQ from Cronobacter sakazakii (strain ATCC BAA-894) (Enterobacter sakazakii).